Consider the following 128-residue polypeptide: NADPH-dependent 7-cyano-7-deazaguanine reductase (128 aa).

Cys34 serves as the catalytic Thioimide intermediate. The Proton donor role is filled by Asp41. Substrate is bound by residues 56 to 58 (IEL) and 75 to 76 (HE).

This sequence belongs to the GTP cyclohydrolase I family. QueF type 1 subfamily.

The protein resides in the cytoplasm. The catalysed reaction is 7-aminomethyl-7-carbaguanine + 2 NADP(+) = 7-cyano-7-deazaguanine + 2 NADPH + 3 H(+). It participates in tRNA modification; tRNA-queuosine biosynthesis. In terms of biological role, catalyzes the NADPH-dependent reduction of 7-cyano-7-deazaguanine (preQ0) to 7-aminomethyl-7-deazaguanine (preQ1). The sequence is that of NADPH-dependent 7-cyano-7-deazaguanine reductase from Ruthia magnifica subsp. Calyptogena magnifica.